The sequence spans 198 residues: Threonylcarbamoyl-AMP synthase (198 aa).

Positions 15-198 (LLKIYHIIKL…AISGQLIRRG (184 aa)) constitute a YrdC-like domain.

The protein belongs to the SUA5 family. TsaC subfamily.

It localises to the cytoplasm. It carries out the reaction L-threonine + hydrogencarbonate + ATP = L-threonylcarbamoyladenylate + diphosphate + H2O. Its function is as follows. Required for the formation of a threonylcarbamoyl group on adenosine at position 37 (t(6)A37) in tRNAs that read codons beginning with adenine. Catalyzes the conversion of L-threonine, HCO(3)(-)/CO(2) and ATP to give threonylcarbamoyl-AMP (TC-AMP) as the acyladenylate intermediate, with the release of diphosphate. The chain is Threonylcarbamoyl-AMP synthase from Baumannia cicadellinicola subsp. Homalodisca coagulata.